Consider the following 73-residue polypeptide: Toxin Td10 (73 aa).

The signal sequence occupies residues 1-7 (IGMVVEC). Positions 8 to 70 (KDGYLMGPDG…VWERATNRCG (63 aa)) constitute an LCN-type CS-alpha/beta domain. 4 cysteine pairs are disulfide-bonded: Cys-18–Cys-69, Cys-22–Cys-44, Cys-30–Cys-50, and Cys-34–Cys-52. Lys-71 carries the post-translational modification Lysine amide.

It belongs to the long (4 C-C) scorpion toxin superfamily. Sodium channel inhibitor family. Beta subfamily. Expressed by the venom gland.

It is found in the secreted. Its function is as follows. Beta toxins bind voltage-independently at site-4 of sodium channels (Nav) and shift the voltage of activation toward more negative potentials thereby affecting sodium channel activation and promoting spontaneous and repetitive firing. The protein is Toxin Td10 of Tityus discrepans (Venezuelan scorpion).